The following is a 1353-amino-acid chain: Protein prickle (1353 aa).

Disordered stretches follow at residues 130 to 206 (VDDG…TKRN), 266 to 292 (QEEE…PPLP), and 500 to 540 (AKYS…SAHA). A compositionally biased stretch (low complexity) spans 147 to 165 (TPTATATAGRPLFPLSSSP). A compositionally biased stretch (basic residues) spans 166–178 (RRSKKLLRSLRAH). Over residues 179 to 189 (VKGESRPEKPA) the composition is skewed to basic and acidic residues. The span at 514-532 (LSPALSTPSPPSLLHHPAA) shows a compositional bias: low complexity. Residues 548–656 (MDMQRQSHSD…NVRQLMSARP (109 aa)) enclose the PET domain. 3 LIM zinc-binding domains span residues 655–719 (RPCD…ETLK), 720–780 (PRCS…MFAE), and 781–843 (YCDY…GEPP). Disordered regions lie at residues 840 to 892 (GEPP…HQAS), 933 to 962 (HCRS…NMSP), and 1062 to 1303 (ADIM…SSSS). Over residues 861–892 (TQRVRPQTRITSSHASSSPPMSPQQQQQHQAS) the composition is skewed to low complexity. 2 stretches are compositionally biased toward polar residues: residues 952–962 (RASSTSHNMSP) and 1111–1120 (SLNTPLSAHS). Residues 1130–1142 (SILSGASSSSPMS) are compositionally biased toward low complexity. Residues 1177–1205 (GDKDRDRDRERDRDRDRDKGGDKDRESGR) are compositionally biased toward basic and acidic residues. Composition is skewed to basic residues over residues 1207 to 1220 (GPGH…RRKS) and 1228 to 1240 (NHHR…RSHS). Residues 1269–1284 (ETAHKSPRQQRERERE) are compositionally biased toward basic and acidic residues.

The protein belongs to the prickle / espinas / testin family. In terms of assembly, interacts with dsh; PET and LIM domains interact with dsh DEP domain, in wing cells. Interacts with Vang in photoreceptor cells.

It localises to the cell membrane. Acts in a planar cell polarity (PCP) complex; polarization along the apical/basal axis of epithelial cells. PCP signaling in the wing disk requires the receptor fz and the cytoplasmic proteins dsh and pk. These act in a feedback loop leading to activation of the jnk cascade and subsequent polarized arrangement of hairs and bristles. Dgo and pk compete with one another for dsh binding, thereby modulating fz dsh activity and ensuring tight control over fz PCP signaling. Vang, stan and pk function together to regulate the establishment of tissue polarity in the adult eye. This Drosophila pseudoobscura pseudoobscura (Fruit fly) protein is Protein prickle.